Consider the following 439-residue polypeptide: 23S rRNA (uracil(1939)-C(5))-methyltransferase RlmD (439 aa).

In terms of domain architecture, TRAM spans 10 to 68 (QKKLRAAFTTIVQDLDYQGLGVAKIQGKTWFIENALPQEQVQVQVIEEKRQYGLGRVQK). Positions 81, 87, 90, and 168 each coordinate [4Fe-4S] cluster. Positions 271, 300, 305, 321, 348, and 369 each coordinate S-adenosyl-L-methionine. C395 functions as the Nucleophile in the catalytic mechanism.

This sequence belongs to the class I-like SAM-binding methyltransferase superfamily. RNA M5U methyltransferase family. RlmD subfamily.

The catalysed reaction is uridine(1939) in 23S rRNA + S-adenosyl-L-methionine = 5-methyluridine(1939) in 23S rRNA + S-adenosyl-L-homocysteine + H(+). Functionally, catalyzes the formation of 5-methyl-uridine at position 1939 (m5U1939) in 23S rRNA. This Histophilus somni (strain 129Pt) (Haemophilus somnus) protein is 23S rRNA (uracil(1939)-C(5))-methyltransferase RlmD.